Consider the following 467-residue polypeptide: Geranylgeranyl diphosphate reductase, chloroplastic (467 aa).

The transit peptide at 1–43 directs the protein to the chloroplast; sequence MATTVTLKSFTGLRQSSTEQTNFVSHVPSSLSLPQRRTSLRVT.

Belongs to the geranylgeranyl reductase family. ChlP subfamily. Part of the FLU-containing chloroplast membrane complex composed of FLU, CRD1, PORB, PORC, CHLP and HEMA1.

Its subcellular location is the plastid. It is found in the chloroplast membrane. It carries out the reaction phytyl diphosphate + 3 NADP(+) = geranylgeranyl diphosphate + 3 NADPH + 3 H(+). It participates in porphyrin-containing compound metabolism; chlorophyll biosynthesis. The protein operates within cofactor biosynthesis; tocopherol biosynthesis. Functionally, catalyzes the reduction of geranylgeranyl diphosphate to phytyl diphosphate, providing phytol for both tocopherol and chlorophyll synthesis. The chain is Geranylgeranyl diphosphate reductase, chloroplastic (CHLP) from Arabidopsis thaliana (Mouse-ear cress).